The chain runs to 102 residues: Small ribosomal subunit protein uS10 (102 aa).

Residues 34-59 (QMSGPIPLPTKRLLVPTRKSPDGEGK) form a disordered region.

Belongs to the universal ribosomal protein uS10 family. In terms of assembly, part of the 30S ribosomal subunit.

In terms of biological role, involved in the binding of tRNA to the ribosomes. The protein is Small ribosomal subunit protein uS10 of Methanopyrus kandleri (strain AV19 / DSM 6324 / JCM 9639 / NBRC 100938).